Here is a 105-residue protein sequence, read N- to C-terminus: CRISPR-associated endoribonuclease Cas2 1 (105 aa).

Asp20 contacts Mg(2+).

The protein belongs to the CRISPR-associated endoribonuclease Cas2 protein family. Homodimer, forms a heterotetramer with a Cas1 homodimer. Requires Mg(2+) as cofactor.

CRISPR (clustered regularly interspaced short palindromic repeat), is an adaptive immune system that provides protection against mobile genetic elements (viruses, transposable elements and conjugative plasmids). CRISPR clusters contain sequences complementary to antecedent mobile elements and target invading nucleic acids. CRISPR clusters are transcribed and processed into CRISPR RNA (crRNA). Functions as a ssRNA-specific endoribonuclease. Involved in the integration of spacer DNA into the CRISPR cassette. The polypeptide is CRISPR-associated endoribonuclease Cas2 1 (cas21) (Nitrosomonas europaea (strain ATCC 19718 / CIP 103999 / KCTC 2705 / NBRC 14298)).